We begin with the raw amino-acid sequence, 630 residues long: Forkhead box protein O (630 aa).

The disordered stretch occupies residues 1 to 45; sequence MDGFVQEWSNLPRSDNGLHMDQLVGELPTDGGFEPQTRARSNTWP. Thr-43 carries the post-translational modification Phosphothreonine; by PKB/AKT1. A DNA-binding region (fork-head) is located at residues 92–198; that stretch reads WGNLSYADLI…ETSRYEKRRG (107 aa). Ser-187 carries the post-translational modification Phosphoserine; by PKB/AKT1. Positions 214–260 are disordered; the sequence is GLNDATPSPSSSVSEGLDHFPESPLHSGGFQLSPDFRQRASSNASSC. Residues 218 to 227 are compositionally biased toward polar residues; it reads ATPSPSSSVS. The residue at position 255 (Ser-255) is a Phosphoserine; by PKB/AKT1. Ser-258, Ser-259, and Ser-264 each carry phosphoserine. 2 disordered regions span residues 318–379 and 403–432; these read SAAS…QQQQ and TRDGLSPNSVTTTMSPAYPNSEPSSDSLNT. Composition is skewed to low complexity over residues 332-350 and 367-379; these read QQQQQQQQQQAQQQSQLPQ and QPQAQQQQQQQQQ. Polar residues-rich tracts occupy residues 408-417 and 423-432; these read SPNSVTTTMS and SEPSSDSLNT.

As to quaternary structure, interacts with melt.

The protein resides in the cytoplasm. It is found in the nucleus. Transcription factor involved in the regulation of the insulin signaling pathway. Consistently activates both the downstream target Thor\d4EBP and the feedback control target InR. Involved in negative regulation of the cell cycle, modulating cell growth and proliferation. In response to cellular stresses, such as nutrient deprivation or increased levels of reactive oxygen species, foxo is activated and inhibits growth through the action of target genes such as Thor. Foxo activated in the adult fat body can regulate lifespan in adults; an insulin peptide itself may function as one secondary messenger of insulin-regulated aging. Also regulates Lip4, homolog of human acid lipases, thereby acting as a key modulator of lipid metabolism by insulin signaling and integrates insulin responses to glucose and lipid homeostasis. The sequence is that of Forkhead box protein O from Drosophila grimshawi (Hawaiian fruit fly).